Reading from the N-terminus, the 69-residue chain is MKISARNQLKGKVVSIENGSVNAIVHIDIGGGNVLSSTVSLAAVKELNLEVGKEAYAIIKATSVMVGVE.

In terms of domain architecture, Mop spans 2-68; sequence KISARNQLKG…IKATSVMVGV (67 aa).

The protein to C.pasteurianum MOP proteins.

Binds one mole of molybdenum per mole of protein and contains a pterin. The protein is Probable molybdenum-pterin-binding protein of Haemophilus influenzae (strain ATCC 51907 / DSM 11121 / KW20 / Rd).